Here is a 665-residue protein sequence, read N- to C-terminus: RNA-directed RNA polymerase (665 aa).

The 176-residue stretch at 310-485 (NKEEKVKEWS…LKEGKVNPSP (176 aa)) folds into the RdRp catalytic domain. 3 residues coordinate Mg(2+): D454, Y491, and G495.

As to quaternary structure, part of the packaging complex composed of RDRP, P4 and P7. Interacts with P7. Requires Mg(2+) as cofactor. Mn(2+) is required as a cofactor.

The protein localises to the virion. It catalyses the reaction RNA(n) + a ribonucleoside 5'-triphosphate = RNA(n+1) + diphosphate. In terms of biological role, rna-dependent RNA polymerase part of the packaging complex that packages the viral RNA segments, replicate them into a double-stranded form and transcribe them. This chain is RNA-directed RNA polymerase (P2), found in Pseudomonas phage phi6 (Bacteriophage phi-6).